A 198-amino-acid polypeptide reads, in one-letter code: MEITIEMIKELRERTGAGVMEAKKALEEANGDMEKAVTILREKGVIKAAKKAGRVAKEGIIEAYIHTGDKLGVLVEVNCETDFVARTDEFRKLAKDIALQIAGMNPQYVSKEDVPPEVIEKEKEIYRTQLKNEGKPEHVIEKIIEGKLEKFYEEVCLLEQPFVRNPEIKVKDLITEAISKLGENIVVRRFARFVVGED.

Positions 81–84 are involved in Mg(2+) ion dislocation from EF-Tu; the sequence is TDFV.

The protein belongs to the EF-Ts family.

It is found in the cytoplasm. Associates with the EF-Tu.GDP complex and induces the exchange of GDP to GTP. It remains bound to the aminoacyl-tRNA.EF-Tu.GTP complex up to the GTP hydrolysis stage on the ribosome. This is Elongation factor Ts from Dictyoglomus thermophilum (strain ATCC 35947 / DSM 3960 / H-6-12).